The following is a 249-amino-acid chain: Triosephosphate isomerase (249 aa).

Position 9–11 (9–11 (NWK)) interacts with substrate. His95 acts as the Electrophile in catalysis. The active-site Proton acceptor is Glu167. Residues Gly173, Ser213, and 234–235 (GG) contribute to the substrate site.

It belongs to the triosephosphate isomerase family. In terms of assembly, homodimer.

It localises to the cytoplasm. The enzyme catalyses D-glyceraldehyde 3-phosphate = dihydroxyacetone phosphate. Its pathway is carbohydrate biosynthesis; gluconeogenesis. It functions in the pathway carbohydrate degradation; glycolysis; D-glyceraldehyde 3-phosphate from glycerone phosphate: step 1/1. Its function is as follows. Involved in the gluconeogenesis. Catalyzes stereospecifically the conversion of dihydroxyacetone phosphate (DHAP) to D-glyceraldehyde-3-phosphate (G3P). In Solibacter usitatus (strain Ellin6076), this protein is Triosephosphate isomerase.